The primary structure comprises 92 residues: Protein S100-A12 (92 aa).

EF-hand domains are found at residues 13–48 (NIFH…IKNI) and 49–84 (KDKA…ALKA). His16 lines the Cu cation pocket. His16 contributes to the Zn(2+) binding site. The Ca(2+) site is built by Ser19, Lys22, and His24. Residue Asp26 participates in Cu cation binding. Asp26 is a Zn(2+) binding site. Ca(2+) contacts are provided by Thr27 and Glu32. Positions 38–53 (TKELANTIKNIKDKAV) are hinge domain. Ca(2+) is bound by residues Asp62, Asn64, Asp66, Gln68, and Glu73. Cu cation is bound by residues His86 and His90. 2 residues coordinate Zn(2+): His86 and His90.

It belongs to the S-100 family. As to quaternary structure, homodimer. Homooligomer (tetramer or hexamer) in the presence of calcium, zinc and copper ions. Interacts with AGER and both calcium and zinc are essential for the interaction. Interacts with CACYBP in a calcium-dependent manner. In terms of tissue distribution, predominantly expressed by neutrophils, monocytes and activated macrophages. Expressed by eosinophils and macrophages in asthmatic airways in regions where mast cells accumulate. Found in high concentrations in the serum of patients suffering from various inflammatory disorders, such as rheumatoid arthritis, psoriatic arthritis, Crohn's disease, ulcerative colitis, and Kawasaki disease.

It is found in the secreted. Its subcellular location is the cytoplasm. The protein resides in the cytoskeleton. It localises to the cell membrane. In terms of biological role, S100A12 is a calcium-, zinc- and copper-binding protein which plays a prominent role in the regulation of inflammatory processes and immune response. Its pro-inflammatory activity involves recruitment of leukocytes, promotion of cytokine and chemokine production, and regulation of leukocyte adhesion and migration. Acts as an alarmin or a danger associated molecular pattern (DAMP) molecule and stimulates innate immune cells via binding to receptor for advanced glycation endproducts (AGER). Binding to AGER activates the MAP-kinase and NF-kappa-B signaling pathways leading to production of pro-inflammatory cytokines and up-regulation of cell adhesion molecules ICAM1 and VCAM1. Acts as a monocyte and mast cell chemoattractant. Can stimulate mast cell degranulation and activation which generates chemokines, histamine and cytokines inducing further leukocyte recruitment to the sites of inflammation. Can inhibit the activity of matrix metalloproteinases; MMP2, MMP3 and MMP9 by chelating Zn(2+) from their active sites. Possesses filariacidal and filariastatic activity. Calcitermin possesses antifungal activity against C.albicans and is also active against E.coli and P.aeruginosa but not L.monocytogenes and S.aureus. The chain is Protein S100-A12 (S100A12) from Homo sapiens (Human).